Here is a 294-residue protein sequence, read N- to C-terminus: Large ribosomal subunit protein uL18 (294 aa).

The interval 247–275 (RADPSPSAKKAAKPSKRHTAKRLTYDERK) is disordered. Residues 256–267 (KAAKPSKRHTAK) show a composition bias toward basic residues.

The protein belongs to the universal ribosomal protein uL18 family. As to quaternary structure, component of the large ribosomal subunit (LSU).

Its subcellular location is the cytoplasm. It is found in the nucleus. Component of the ribosome, a large ribonucleoprotein complex responsible for the synthesis of proteins in the cell. The small ribosomal subunit (SSU) binds messenger RNAs (mRNAs) and translates the encoded message by selecting cognate aminoacyl-transfer RNA (tRNA) molecules. The large subunit (LSU) contains the ribosomal catalytic site termed the peptidyl transferase center (PTC), which catalyzes the formation of peptide bonds, thereby polymerizing the amino acids delivered by tRNAs into a polypeptide chain. The nascent polypeptides leave the ribosome through a tunnel in the LSU and interact with protein factors that function in enzymatic processing, targeting, and the membrane insertion of nascent chains at the exit of the ribosomal tunnel. The sequence is that of Large ribosomal subunit protein uL18 (rpl-5) from Caenorhabditis briggsae.